The sequence spans 3189 residues: Beauvericin nonribosomal cyclodepsipeptide synthetase (3189 aa).

Residues 73–466 are condensation 1; the sequence is HAMYEISQHV…EQLQSAADDA (394 aa). Residues 202–223 form a disordered region; the sequence is DSLPLTPDSSGGSDSDSPSTLK. Positions 208-220 are enriched in low complexity; the sequence is PDSSGGSDSDSPS. Residues 507–901 are adenylation 1; that stretch reads AESPSDPAVL…GRIDSQVKIR (395 aa). Residues 1036 to 1112 enclose the Carrier 1 domain; sequence TLETGPEARL…RLQAVMSGDS (77 aa). S1073 bears the O-(pantetheine 4'-phosphoryl)serine mark. The segment at 1136 to 1569 is condensation 2; the sequence is SYSQGRLWFL…KSLISVLPLT (434 aa). The interval 1599–2004 is adenylation 2; the sequence is FRSQVATCPD…GRMDFQFKIR (406 aa). The segment at 2072-2211 is S-adenosyl-L-methionine-dependent N-methyltransferase; sequence MYNGIDAISP…FPTVEYLTRV (140 aa). Carrier domains are found at residues 2557–2631 and 2654–2728; these read CPIS…REGL and APRN…ELGQ. S2591 and S2688 each carry O-(pantetheine 4'-phosphoryl)serine. The interval 2773–3181 is condensation 3; the sequence is QDVYPATHMQ…AYLMEEVCRL (409 aa).

Belongs to the NRP synthetase family.

It catalyses the reaction 3 (R)-2-hydroxy-3-methylbutanoate + 3 L-phenylalanine + 3 S-adenosyl-L-methionine + 6 ATP = beauvericin + 6 AMP + 3 S-adenosyl-L-homocysteine + 6 diphosphate + 6 H(+). Functionally, beauvericin nonribosomal cyclodepsipeptide synthetase; part of the gene cluster that mediates the biosynthesis of beauvericin (BEA), a non-ribosomal cyclic hexadepsipeptide that shows antibiotic, antifungal, insecticidal, and cancer cell antiproliferative and antihaptotactic activity. Ketoisovalerate reductase BEA2 catalyzes the NADPH-specific reduction of ketoisovaleric acid to hydroxyisovalerate, a precursor for beauvericin biosynthesis. The nonribosomal cyclodepsipeptide synthetase BEA1 then catalyzes the formation of beauvericin via condensation and cyclization of 3 dipeptidol monomers, each composed of one unit of hydroxyisovalerate and one unit of N-methyl-phenylalanine. This is Beauvericin nonribosomal cyclodepsipeptide synthetase (Beas) from Beauveria bassiana (White muscardine disease fungus).